A 358-amino-acid polypeptide reads, in one-letter code: 3-dehydroquinate synthase (358 aa).

Residues 70-75, 104-108, 128-129, Lys-141, Lys-150, and 168-171 contribute to the NAD(+) site; these read DGEQYK, GVIGD, TT, and CLST. Glu-183, His-246, and His-263 together coordinate Zn(2+).

It belongs to the sugar phosphate cyclases superfamily. Dehydroquinate synthase family. Requires Co(2+) as cofactor. The cofactor is Zn(2+). NAD(+) serves as cofactor.

It localises to the cytoplasm. The enzyme catalyses 7-phospho-2-dehydro-3-deoxy-D-arabino-heptonate = 3-dehydroquinate + phosphate. It participates in metabolic intermediate biosynthesis; chorismate biosynthesis; chorismate from D-erythrose 4-phosphate and phosphoenolpyruvate: step 2/7. Its function is as follows. Catalyzes the conversion of 3-deoxy-D-arabino-heptulosonate 7-phosphate (DAHP) to dehydroquinate (DHQ). This Shewanella woodyi (strain ATCC 51908 / MS32) protein is 3-dehydroquinate synthase.